Consider the following 367-residue polypeptide: Peroxisome biogenesis protein 16 (367 aa).

Positions 135–173 are disordered; the sequence is GGETPNEEKDSNQSESQNRAGNSGRNLGPHGLGNQNHHN. Residues 147-159 are compositionally biased toward polar residues; that stretch reads QSESQNRAGNSGR. Transmembrane regions (helical) follow at residues 237 to 257 and 264 to 284; these read ALFA…VLFI and SWIP…LLAN.

The protein belongs to the peroxin-16 family. Interacts with APEM9 (via both N- and C-terminus). In terms of processing, the detection of an additional immunorelated polypeptide of 52 kDa suggests a post-translational modification of PEX16. In terms of tissue distribution, expressed in roots, siliques, seeds, cotyledons, leaves and flowers. Low expression in leaves and roots.

The protein resides in the peroxisome membrane. It is found in the endoplasmic reticulum membrane. Functionally, involved in the formation of peroxisomes, lipid bodies and protein bodies. This is Peroxisome biogenesis protein 16 from Arabidopsis thaliana (Mouse-ear cress).